We begin with the raw amino-acid sequence, 860 residues long: DNA mismatch repair protein MutS (860 aa).

621–628 (GPNMGGKS) serves as a coordination point for ATP.

This sequence belongs to the DNA mismatch repair MutS family.

Functionally, this protein is involved in the repair of mismatches in DNA. It is possible that it carries out the mismatch recognition step. This protein has a weak ATPase activity. The protein is DNA mismatch repair protein MutS of Salmonella arizonae (strain ATCC BAA-731 / CDC346-86 / RSK2980).